The chain runs to 183 residues: Oleosin 5 (183 aa).

The segment at 1–39 is polar; sequence MADVRTHSHQLQVHPQRQHEGGIKVLYPQSGPSSTQVLA. Helical transmembrane passes span 37–57, 66–86, and 87–107; these read VLAVFVGVPIGGTLLTIAGLT, MLAFPLFLIFSPVIVPAAFVI, and GLAMTGFLASGAIGLTGLSSM. The tract at residues 40 to 113 is hydrophobic; that stretch reads VFVGVPIGGT…LSSMSWVLNY (74 aa). Residues 144–183 are disordered; it reads KDAGQTIEDKAHDVREAKTFDVRDRDTTKGTHNVRDTKTT.

It belongs to the oleosin family.

The protein resides in the lipid droplet. It localises to the membrane. Its function is as follows. May have a structural role to stabilize the lipid body during desiccation of the seed by preventing coalescence of the oil. Probably interacts with both lipid and phospholipid moieties of lipid bodies. May also provide recognition signals for specific lipase anchorage in lipolysis during seedling growth. In Arabidopsis thaliana (Mouse-ear cress), this protein is Oleosin 5.